The chain runs to 358 residues: Tripartite motif-containing protein 54 (358 aa).

The segment at 26–82 adopts an RING-type zinc-finger fold; the sequence is CPICLEMFSKPVVILPCQHNLCRKCANDVFQASNPLWQSRGSTTVSSGGRFRCPSCR. The segment at 121-163 adopts a B box-type zinc-finger fold; it reads EQHLMCEEHEEEKINIYCLSCEVPTCSLCKVFGAHKDCEVAPL. Cys126, His129, Cys149, and His155 together coordinate Zn(2+). Residues 168-211 form a mediates microtubule-binding and homooligomerization region; sequence KRQKSELSDGIAMLVAGNDRVQAVITQMEEVCQTIEDNSRRQKQ. The stretch at 194-258 forms a coiled coil; it reads QMEEVCQTIE…LIRQYGDHLE (65 aa). Positions 271-329 constitute a COS domain; the sequence is MEEPQMALYLQQAKELINKVGAMSKVELAGRPEPGYESMEQFTVSVEHVAEMLRTIDFQ. The tract at residues 326-358 is disordered; the sequence is IDFQPGASGEEEEVAPDGDEGSAGQEEERPDGP. A compositionally biased stretch (acidic residues) spans 334–345; that stretch reads GEEEEVAPDGDE.

In terms of assembly, homooligomer and heterooligomer. Interacts with TRIM63 and probably with TRIM55. Interacts with tubulin.

Its subcellular location is the cytoplasm. It localises to the cytoskeleton. The protein resides in the myofibril. It is found in the sarcomere. The protein localises to the z line. May bind and stabilize microtubules during myotubes formation. The polypeptide is Tripartite motif-containing protein 54 (TRIM54) (Pongo abelii (Sumatran orangutan)).